A 412-amino-acid polypeptide reads, in one-letter code: rRNA methyltransferase 1, mitochondrial (412 aa).

A mitochondrion-targeting transit peptide spans 1–20; that stretch reads MTSLTNAVFKRYLAVTPSAH.

The protein belongs to the class IV-like SAM-binding methyltransferase superfamily. RNA methyltransferase TrmH family.

It is found in the mitochondrion. The catalysed reaction is guanosine(2270) in 21S rRNA + S-adenosyl-L-methionine = 2'-O-methylguanosine(2270) in 21S rRNA + S-adenosyl-L-homocysteine + H(+). In terms of biological role, S-adenosyl-L-methionine-dependent 2'-O-ribose methyltransferase that catalyzes the formation of 2'-O-methylguanosine at position 2270 (Gm2270) in the 21S mitochondrial large subunit ribosomal RNA (mtLSU rRNA), a universally conserved modification in the peptidyl transferase domain of the mtLSU rRNA. This modification seems to be important for the normal accumulation of the mitochondrial large ribosomal subunit. The chain is rRNA methyltransferase 1, mitochondrial from Saccharomyces cerevisiae (strain ATCC 204508 / S288c) (Baker's yeast).